The chain runs to 495 residues: MSRAMALSQLLPDVALARDVQVSGLVMDSRAVRPGDAFVAIAGFGAHGLGFAAQALASGASAILFEPPAPADLPVPADAIAVPGLRARLGVLADHFHGAPSQAMRMIGVTGTNGKTSTVQLLAQALTLLGTPTGTIGTLGVGLYGAAVPTGFTTPLVLQTHAELAQLRDAGAQAVAMEVSSHALDQGRVDAVQFDVAVFTNLTRDHLDYHGDMAQYGAAKAKLFARAGLRAAVVNLDDAFGRTLFAALDPALHAIGVSSRAQAGATVQAQDLQLDHHGIQFTLHIGEAAHPVRSPLLGRFNVDNLLAVAGALHALDIAPAQIAEVLGRLQPIHGRMNRLGGAHGAPLVVVDYAHTPDALEQALTSLRSHAQDRLICVFGCGGERDTGKRPQMAAIAEVTADVAIVTDDNPRGEDGDVIVADILRGFARPDAAIVQRDRAAAIHQAISMAGADDIVLIAGKGHEPYQEVAGVRHAFDDAAVAAQALLPRTGLGVRV.

Position 29 (Ser-29) interacts with UDP-N-acetyl-alpha-D-muramoyl-L-alanyl-D-glutamate. 111–117 (GTNGKTS) serves as a coordination point for ATP. UDP-N-acetyl-alpha-D-muramoyl-L-alanyl-D-glutamate-binding positions include 153-154 (TT), Ser-180, Gln-186, and Arg-188. Lys-220 is modified (N6-carboxylysine). Meso-2,6-diaminopimelate contacts are provided by residues Arg-384, 408-411 (DNPR), Gly-459, and Glu-463. The short motif at 408–411 (DNPR) is the Meso-diaminopimelate recognition motif element.

Belongs to the MurCDEF family. MurE subfamily. Mg(2+) is required as a cofactor. In terms of processing, carboxylation is probably crucial for Mg(2+) binding and, consequently, for the gamma-phosphate positioning of ATP.

It localises to the cytoplasm. It carries out the reaction UDP-N-acetyl-alpha-D-muramoyl-L-alanyl-D-glutamate + meso-2,6-diaminopimelate + ATP = UDP-N-acetyl-alpha-D-muramoyl-L-alanyl-gamma-D-glutamyl-meso-2,6-diaminopimelate + ADP + phosphate + H(+). Its pathway is cell wall biogenesis; peptidoglycan biosynthesis. Functionally, catalyzes the addition of meso-diaminopimelic acid to the nucleotide precursor UDP-N-acetylmuramoyl-L-alanyl-D-glutamate (UMAG) in the biosynthesis of bacterial cell-wall peptidoglycan. In Xanthomonas campestris pv. campestris (strain 8004), this protein is UDP-N-acetylmuramoyl-L-alanyl-D-glutamate--2,6-diaminopimelate ligase.